The following is a 202-amino-acid chain: Dephospho-CoA kinase (202 aa).

The 198-residue stretch at 5 to 202 (IVGLTGGIAS…DADYRARSDR (198 aa)) folds into the DPCK domain. Residue 13-18 (ASGKSA) coordinates ATP.

It belongs to the CoaE family.

Its subcellular location is the cytoplasm. It carries out the reaction 3'-dephospho-CoA + ATP = ADP + CoA + H(+). It functions in the pathway cofactor biosynthesis; coenzyme A biosynthesis; CoA from (R)-pantothenate: step 5/5. In terms of biological role, catalyzes the phosphorylation of the 3'-hydroxyl group of dephosphocoenzyme A to form coenzyme A. The protein is Dephospho-CoA kinase of Xanthomonas oryzae pv. oryzae (strain MAFF 311018).